Here is a 239-residue protein sequence, read N- to C-terminus: ATP-dependent dethiobiotin synthetase BioD (239 aa).

15-20 is an ATP binding site; the sequence is EIGKTF. Position 19 (threonine 19) interacts with Mg(2+). The active site involves lysine 40. Residues aspartate 57, 118–121, and 178–179 contribute to the ATP site; these read EGVG and NH. 2 residues coordinate Mg(2+): aspartate 57 and glutamate 118.

It belongs to the dethiobiotin synthetase family. Homodimer. Mg(2+) is required as a cofactor.

It localises to the cytoplasm. It carries out the reaction (7R,8S)-7,8-diammoniononanoate + CO2 + ATP = (4R,5S)-dethiobiotin + ADP + phosphate + 3 H(+). It participates in cofactor biosynthesis; biotin biosynthesis; biotin from 7,8-diaminononanoate: step 1/2. Catalyzes a mechanistically unusual reaction, the ATP-dependent insertion of CO2 between the N7 and N8 nitrogen atoms of 7,8-diaminopelargonic acid (DAPA, also called 7,8-diammoniononanoate) to form a ureido ring. The chain is ATP-dependent dethiobiotin synthetase BioD from Burkholderia orbicola (strain MC0-3).